The chain runs to 367 residues: Probable peptidoglycan glycosyltransferase FtsW (367 aa).

Helical transmembrane passes span leucine 32–phenylalanine 52, alanine 57–glycine 77, isoleucine 87–phenylalanine 107, isoleucine 119–leucine 139, methionine 149–phenylalanine 169, leucine 171–methionine 191, valine 251–leucine 271, glycine 296–phenylalanine 316, and leucine 323–leucine 343.

Belongs to the SEDS family. FtsW subfamily.

It localises to the cell inner membrane. It catalyses the reaction [GlcNAc-(1-&gt;4)-Mur2Ac(oyl-L-Ala-gamma-D-Glu-L-Lys-D-Ala-D-Ala)](n)-di-trans,octa-cis-undecaprenyl diphosphate + beta-D-GlcNAc-(1-&gt;4)-Mur2Ac(oyl-L-Ala-gamma-D-Glu-L-Lys-D-Ala-D-Ala)-di-trans,octa-cis-undecaprenyl diphosphate = [GlcNAc-(1-&gt;4)-Mur2Ac(oyl-L-Ala-gamma-D-Glu-L-Lys-D-Ala-D-Ala)](n+1)-di-trans,octa-cis-undecaprenyl diphosphate + di-trans,octa-cis-undecaprenyl diphosphate + H(+). The protein operates within cell wall biogenesis; peptidoglycan biosynthesis. Its function is as follows. Peptidoglycan polymerase that is essential for cell division. The polypeptide is Probable peptidoglycan glycosyltransferase FtsW (Taylorella equigenitalis (strain MCE9)).